We begin with the raw amino-acid sequence, 284 residues long: Acetylglutamate kinase (284 aa).

Substrate-binding positions include 66–67 (GG), Arg88, and Asn179.

Belongs to the acetylglutamate kinase family. ArgB subfamily.

The protein localises to the cytoplasm. It catalyses the reaction N-acetyl-L-glutamate + ATP = N-acetyl-L-glutamyl 5-phosphate + ADP. It functions in the pathway amino-acid biosynthesis; L-arginine biosynthesis; N(2)-acetyl-L-ornithine from L-glutamate: step 2/4. Catalyzes the ATP-dependent phosphorylation of N-acetyl-L-glutamate. This is Acetylglutamate kinase from Actinobacillus pleuropneumoniae serotype 7 (strain AP76).